The sequence spans 861 residues: E3 ubiquitin-protein ligase HECTD3 (861 aa).

A2 bears the N-acetylalanine mark. S12 is modified (phosphoserine). The region spanning 219–397 (DEDLIHFLYD…TSLVRYPRLE (179 aa)) is the DOC domain. The HECT domain maps to 512-857 (YEKPLDYRWP…NCVAIDTDMS (346 aa)). Catalysis depends on C823, which acts as the Glycyl thioester intermediate.

Interacts with TRIOBP. Interacts with STX8.

Its subcellular location is the cytoplasm. The protein resides in the perinuclear region. The enzyme catalyses S-ubiquitinyl-[E2 ubiquitin-conjugating enzyme]-L-cysteine + [acceptor protein]-L-lysine = [E2 ubiquitin-conjugating enzyme]-L-cysteine + N(6)-ubiquitinyl-[acceptor protein]-L-lysine.. It participates in protein modification; protein ubiquitination. Its function is as follows. E3 ubiquitin ligases accepts ubiquitin from an E2 ubiquitin-conjugating enzyme in the form of a thioester and then directly transfers the ubiquitin to targeted substrates. Mediates ubiquitination of TRIOBP and its subsequent proteasomal degradation, thus facilitating cell cycle progression by regulating the turn-over of TRIOBP. Mediates also ubiquitination of STX8. In Homo sapiens (Human), this protein is E3 ubiquitin-protein ligase HECTD3 (HECTD3).